The sequence spans 488 residues: Glutamyl-tRNA(Gln) amidotransferase subunit A (488 aa).

Catalysis depends on charge relay system residues lysine 77 and serine 152. Serine 176 (acyl-ester intermediate) is an active-site residue.

It belongs to the amidase family. GatA subfamily. As to quaternary structure, heterotrimer of A, B and C subunits.

The catalysed reaction is L-glutamyl-tRNA(Gln) + L-glutamine + ATP + H2O = L-glutaminyl-tRNA(Gln) + L-glutamate + ADP + phosphate + H(+). Its function is as follows. Allows the formation of correctly charged Gln-tRNA(Gln) through the transamidation of misacylated Glu-tRNA(Gln) in organisms which lack glutaminyl-tRNA synthetase. The reaction takes place in the presence of glutamine and ATP through an activated gamma-phospho-Glu-tRNA(Gln). This is Glutamyl-tRNA(Gln) amidotransferase subunit A from Streptococcus pneumoniae serotype 19F (strain G54).